The primary structure comprises 105 residues: UPF0060 membrane protein Ajs_1326 (105 aa).

A run of 4 helical transmembrane segments spans residues 4 to 24 (FALF…PYLW), 30 to 50 (SAWL…LLTL), 60 to 80 (AAYG…VDGI), and 82 to 102 (PTAW…LIMF).

This sequence belongs to the UPF0060 family.

The protein resides in the cell inner membrane. The polypeptide is UPF0060 membrane protein Ajs_1326 (Acidovorax sp. (strain JS42)).